The primary structure comprises 138 residues: Small ribosomal subunit protein uS11c (138 aa).

A disordered region spans residues methionine 1–arginine 23. Positions glycine 9–arginine 23 are enriched in basic residues.

Belongs to the universal ribosomal protein uS11 family. Part of the 30S ribosomal subunit.

The protein resides in the plastid. It localises to the chloroplast. The polypeptide is Small ribosomal subunit protein uS11c (Buxus microphylla (Littleleaf boxwood)).